We begin with the raw amino-acid sequence, 117 residues long: Large ribosomal subunit protein uL18 (117 aa).

The protein belongs to the universal ribosomal protein uL18 family. In terms of assembly, part of the 50S ribosomal subunit; part of the 5S rRNA/L5/L18/L25 subcomplex. Contacts the 5S and 23S rRNAs.

Its function is as follows. This is one of the proteins that bind and probably mediate the attachment of the 5S RNA into the large ribosomal subunit, where it forms part of the central protuberance. This Buchnera aphidicola subsp. Acyrthosiphon kondoi (Acyrthosiphon kondoi symbiotic bacterium) protein is Large ribosomal subunit protein uL18.